A 345-amino-acid chain; its full sequence is Dihydroorotase (345 aa).

Zn(2+) contacts are provided by His-14 and His-16. Substrate contacts are provided by residues 16–18 (HLR) and Asn-42. 3 residues coordinate Zn(2+): Lys-100, His-137, and His-175. Lys-100 bears the N6-carboxylysine mark. Residue His-137 participates in substrate binding. Position 220 (Leu-220) interacts with substrate. Asp-248 is a binding site for Zn(2+). Residue Asp-248 is part of the active site. Residues His-252 and Ala-264 each coordinate substrate.

Belongs to the metallo-dependent hydrolases superfamily. DHOase family. Class II DHOase subfamily. Homodimer. Zn(2+) serves as cofactor.

The enzyme catalyses (S)-dihydroorotate + H2O = N-carbamoyl-L-aspartate + H(+). It participates in pyrimidine metabolism; UMP biosynthesis via de novo pathway; (S)-dihydroorotate from bicarbonate: step 3/3. Its function is as follows. Catalyzes the reversible cyclization of carbamoyl aspartate to dihydroorotate. The protein is Dihydroorotase of Methylobacillus flagellatus (strain ATCC 51484 / DSM 6875 / VKM B-1610 / KT).